Reading from the N-terminus, the 312-residue chain is DNA-directed RNA polymerase subunit alpha (312 aa).

The tract at residues 1 to 229 (MLQYQIDRIE…ELFQPLATVT (229 aa)) is alpha N-terminal domain (alpha-NTD). Residues 236–312 (IEPEPSAEAQ…ISIPQSRTSV (77 aa)) are alpha C-terminal domain (alpha-CTD).

Belongs to the RNA polymerase alpha chain family. In terms of assembly, in cyanobacteria the RNAP catalytic core is composed of 2 alpha, 1 beta, 1 beta', 1 gamma and 1 omega subunit. When a sigma factor is associated with the core the holoenzyme is formed, which can initiate transcription.

It carries out the reaction RNA(n) + a ribonucleoside 5'-triphosphate = RNA(n+1) + diphosphate. DNA-dependent RNA polymerase catalyzes the transcription of DNA into RNA using the four ribonucleoside triphosphates as substrates. The polypeptide is DNA-directed RNA polymerase subunit alpha (Synechococcus sp. (strain CC9311)).